Consider the following 104-residue polypeptide: Pyrimidine/purine nucleoside phosphorylase (104 aa).

It belongs to the nucleoside phosphorylase PpnP family.

The enzyme catalyses a purine D-ribonucleoside + phosphate = a purine nucleobase + alpha-D-ribose 1-phosphate. It catalyses the reaction adenosine + phosphate = alpha-D-ribose 1-phosphate + adenine. It carries out the reaction cytidine + phosphate = cytosine + alpha-D-ribose 1-phosphate. The catalysed reaction is guanosine + phosphate = alpha-D-ribose 1-phosphate + guanine. The enzyme catalyses inosine + phosphate = alpha-D-ribose 1-phosphate + hypoxanthine. It catalyses the reaction thymidine + phosphate = 2-deoxy-alpha-D-ribose 1-phosphate + thymine. It carries out the reaction uridine + phosphate = alpha-D-ribose 1-phosphate + uracil. The catalysed reaction is xanthosine + phosphate = alpha-D-ribose 1-phosphate + xanthine. Catalyzes the phosphorolysis of diverse nucleosides, yielding D-ribose 1-phosphate and the respective free bases. Can use uridine, adenosine, guanosine, cytidine, thymidine, inosine and xanthosine as substrates. Also catalyzes the reverse reactions. The sequence is that of Pyrimidine/purine nucleoside phosphorylase from Pelobacter propionicus (strain DSM 2379 / NBRC 103807 / OttBd1).